The following is a 342-amino-acid chain: Lumican (342 aa).

Residues methionine 1 to serine 18 form the signal peptide. Sulfotyrosine is present on residues tyrosine 20, tyrosine 23, and tyrosine 34. One can recognise an LRRNT domain in the interval alanine 32–proline 70. 8 LRR repeats span residues glycine 71–asparagine 92, aspartate 95–lysine 118, glutamine 121–lysine 141, serine 142–valine 163, asparagine 164–lysine 185, serine 189–valine 209, serine 210–arginine 231, and alanine 234–serine 254. N-linked (GlcNAc...) (keratan sulfate) asparagine glycosylation is present at asparagine 92. Asparagine 131 carries N-linked (GlcNAc...) (keratan sulfate) asparagine glycosylation. Residue asparagine 164 is glycosylated (N-linked (GlcNAc...) (keratan sulfate) asparagine). N-linked (GlcNAc...) (keratan sulfate) asparagine glycosylation is present at asparagine 256. LRR repeat units follow at residues serine 259–leucine 280 and glutamate 281–lysine 300. A disulfide bridge connects residues cysteine 299 and cysteine 332. Serine 308 is subject to Phosphoserine. One copy of the LRR 11 repeat lies at lysine 309–tyrosine 330.

The protein belongs to the small leucine-rich proteoglycan (SLRP) family. SLRP class II subfamily. As to quaternary structure, binds to laminin. Post-translationally, sulfated on tyrosine residue(s). Contains keratan sulfate. As to expression, cornea and other tissues.

It is found in the secreted. Its subcellular location is the extracellular space. It localises to the extracellular matrix. This chain is Lumican (LUM), found in Bos taurus (Bovine).